Here is a 147-residue protein sequence, read N- to C-terminus: MLMPKRVKYRKQQRGRMKGKATRGNFVAYGDFGIMALEPGWITSNQIEAARVAIARHIKRGGKVWIKIFPDKPVTRKPAETRMGSGKGSPEYWVAVVKPGRVMFEVGGVDKEVAKEALRLAIHKLPIKCKIVSRQDVEMGGEVNEGV.

It belongs to the universal ribosomal protein uL16 family. Part of the 50S ribosomal subunit.

In terms of biological role, binds 23S rRNA and is also seen to make contacts with the A and possibly P site tRNAs. The polypeptide is Large ribosomal subunit protein uL16 (Caldicellulosiruptor saccharolyticus (strain ATCC 43494 / DSM 8903 / Tp8T 6331)).